Reading from the N-terminus, the 151-residue chain is Deoxyuridine 5'-triphosphate nucleotidohydrolase (151 aa).

Substrate-binding positions include 70–72 (RSG), N83, 87–89 (LID), and M97.

This sequence belongs to the dUTPase family. Requires Mg(2+) as cofactor.

It carries out the reaction dUTP + H2O = dUMP + diphosphate + H(+). Its pathway is pyrimidine metabolism; dUMP biosynthesis; dUMP from dCTP (dUTP route): step 2/2. Its function is as follows. This enzyme is involved in nucleotide metabolism: it produces dUMP, the immediate precursor of thymidine nucleotides and it decreases the intracellular concentration of dUTP so that uracil cannot be incorporated into DNA. In Pseudomonas aeruginosa (strain UCBPP-PA14), this protein is Deoxyuridine 5'-triphosphate nucleotidohydrolase.